We begin with the raw amino-acid sequence, 462 residues long: Phosphoglucosamine mutase (462 aa).

S111 (phosphoserine intermediate) is an active-site residue. Mg(2+)-binding residues include S111, D250, D252, and D254. Phosphoserine is present on S111.

This sequence belongs to the phosphohexose mutase family. Mg(2+) is required as a cofactor. In terms of processing, activated by phosphorylation.

The enzyme catalyses alpha-D-glucosamine 1-phosphate = D-glucosamine 6-phosphate. Catalyzes the conversion of glucosamine-6-phosphate to glucosamine-1-phosphate. The sequence is that of Phosphoglucosamine mutase from Synechococcus sp. (strain WH7803).